The chain runs to 559 residues: N-acetylglucosamine-6-sulfatase (559 aa).

A disordered region spans residues Met1–Pro26. The signal sequence occupies residues Met1 to Ala47. Residues Asp62, Asp63, and Cys98 each contribute to the Ca(2+) site. Cys98 serves as the catalytic Nucleophile. At Cys98 the chain carries 3-oxoalanine (Cys). N-linked (GlcNAc...) asparagine glycans are attached at residues Asn118, Asn124, Asn190, Asn205, Asn217, Asn286, and Asn324. Ca(2+) is bound by residues Asp333 and Asn334. N-linked (GlcNAc...) asparagine glycans are attached at residues Asn369, Asn394, Asn412, Asn429, Asn456, and Asn487. Ser548 carries the post-translational modification Phosphoserine.

Belongs to the sulfatase family. Ca(2+) is required as a cofactor. Processed by internal peptidase. In terms of processing, the conversion to 3-oxoalanine (also known as C-formylglycine, FGly), of a serine or cysteine residue in prokaryotes and of a cysteine residue in eukaryotes, is critical for catalytic activity.

The protein localises to the lysosome. The enzyme catalyses Hydrolysis of the 6-sulfate groups of the N-acetyl-D-glucosamine 6-sulfate units of heparan sulfate and keratan sulfate.. Hydrolyzes 6-sulfate groups in N-acetyl-d-glucosaminide units of heparin sulfate and keratan sulfate. In Capra hircus (Goat), this protein is N-acetylglucosamine-6-sulfatase (GNS).